Here is a 195-residue protein sequence, read N- to C-terminus: Dehydrin DHN1 (195 aa).

The tract at residues 1-195 (MAEYGDQYGR…IKEKLPGGHH (195 aa)) is disordered. A compositionally biased stretch (low complexity) spans 37–48 (YGTTGTTVGYGT). Polar residues predominate over residues 50–64 (QCVTTVTTGAQKTDQ). Over residues 65 to 88 (YGTPGTTGAYGTDQYGTTGTTGEY) the composition is skewed to low complexity. 2 stretches are compositionally biased toward basic and acidic residues: residues 136–153 (KEKI…DDQT) and 173–195 (SPEH…GGHH).

The protein belongs to the plant dehydrin family. Phosphorylated in vitro by CK2. As to expression, expressed in roots and leaves.

Its subcellular location is the cytoplasm. It localises to the nucleus. The polypeptide is Dehydrin DHN1 (Avicennia marina (Grey mangrove)).